Consider the following 326-residue polypeptide: Protein ORF5 in retron Ec67 (326 aa).

Residues 1 to 24 (MGKSKKNRAAATNQLKHKSQTSAE) form a disordered region. Residues 10 to 24 (AATNQLKHKSQTSAE) are compositionally biased toward polar residues.

This sequence belongs to the phage portal family. PBSX subfamily.

This Escherichia coli protein is Protein ORF5 in retron Ec67.